Consider the following 157-residue polypeptide: MYFCGYMKNSINIKNRKAKFNYEFLDKYTAGIKLAGTEIKAIREGKANIAESFCEFNNHELFVINMHVEEYSHATHFNHNPRSQRKLLLQRRELRKLEKEVTNSGLTIIPLRLFINDRGLAKLQISLAKGKKLYDKRETIKDRESKRRLDRIQKEYK.

It belongs to the SmpB family.

It localises to the cytoplasm. Functionally, required for rescue of stalled ribosomes mediated by trans-translation. Binds to transfer-messenger RNA (tmRNA), required for stable association of tmRNA with ribosomes. tmRNA and SmpB together mimic tRNA shape, replacing the anticodon stem-loop with SmpB. tmRNA is encoded by the ssrA gene; the 2 termini fold to resemble tRNA(Ala) and it encodes a 'tag peptide', a short internal open reading frame. During trans-translation Ala-aminoacylated tmRNA acts like a tRNA, entering the A-site of stalled ribosomes, displacing the stalled mRNA. The ribosome then switches to translate the ORF on the tmRNA; the nascent peptide is terminated with the 'tag peptide' encoded by the tmRNA and targeted for degradation. The ribosome is freed to recommence translation, which seems to be the essential function of trans-translation. The protein is SsrA-binding protein of Christiangramia forsetii (strain DSM 17595 / CGMCC 1.15422 / KT0803) (Gramella forsetii).